Reading from the N-terminus, the 186-residue chain is Zein-alpha PZ19.1 (186 aa).

Positions 1–21 are cleaved as a signal peptide; sequence MAAKIFCLIMLLGLSASAATA.

This sequence belongs to the zein family.

Its function is as follows. Zeins are major seed storage proteins. The polypeptide is Zein-alpha PZ19.1 (Zea mays (Maize)).